A 126-amino-acid polypeptide reads, in one-letter code: Probable 4-amino-4-deoxy-L-arabinose-phosphoundecaprenol flippase subunit ArnF (126 aa).

A helical transmembrane segment spans residues 1–21; it reads MGFLWALFSVGLVSAAQLLLR. Residues 22–47 are Periplasmic-facing; the sequence is SAMVALPPLTDIVAFLQHLLHFQPGT. The chain crosses the membrane as a helical span at residues 48–68; sequence VGLFFGLLGYLLSMVCWYFAL. Residues 69–76 lie on the Cytoplasmic side of the membrane; it reads HRLPLSKA. A helical transmembrane segment spans residues 77-97; it reads YALLSLSYILVWAAAIWLPGW. Residues 98 to 100 are Periplasmic-facing; it reads HEP. A helical transmembrane segment spans residues 101–121; it reads FYWQSLLGVTIIVAGVLTIFW. At 122-126 the chain is on the cytoplasmic side; sequence PVKRR.

Belongs to the ArnF family. Heterodimer of ArnE and ArnF.

It is found in the cell inner membrane. It functions in the pathway bacterial outer membrane biogenesis; lipopolysaccharide biosynthesis. Translocates 4-amino-4-deoxy-L-arabinose-phosphoundecaprenol (alpha-L-Ara4N-phosphoundecaprenol) from the cytoplasmic to the periplasmic side of the inner membrane. The sequence is that of Probable 4-amino-4-deoxy-L-arabinose-phosphoundecaprenol flippase subunit ArnF from Klebsiella pneumoniae (strain 342).